A 411-amino-acid polypeptide reads, in one-letter code: Translation initiation factor 2 subunit gamma (411 aa).

The tr-type G domain maps to 9 to 203 (QAEVNIGMVG…AIEDFIPTPK (195 aa)). The G1 stretch occupies residues 18-25 (GHVDHGKT). The Mg(2+) site is built by Asp21, Thr25, Gly46, and Thr48. 21–26 (DHGKTT) contacts GTP. A G2 region spans residues 46–50 (GITIK). Residues Cys61, Cys64, Cys73, and Cys76 each contribute to the Zn(2+) site. The segment at 90–93 (DAPG) is G3. GTP-binding positions include 146-149 (NKIE) and 181-183 (SAL). The tract at residues 146 to 149 (NKIE) is G4. The segment at 181–183 (SAL) is G5.

This sequence belongs to the TRAFAC class translation factor GTPase superfamily. Classic translation factor GTPase family. EIF2G subfamily. Heterotrimer composed of an alpha, a beta and a gamma chain. It depends on Mg(2+) as a cofactor.

It carries out the reaction GTP + H2O = GDP + phosphate + H(+). In terms of biological role, eIF-2 functions in the early steps of protein synthesis by forming a ternary complex with GTP and initiator tRNA. The chain is Translation initiation factor 2 subunit gamma from Pyrococcus horikoshii (strain ATCC 700860 / DSM 12428 / JCM 9974 / NBRC 100139 / OT-3).